The primary structure comprises 295 residues: 33 kDa chaperonin (295 aa).

2 disulfides stabilise this stretch: Cys233-Cys235 and Cys267-Cys270.

The protein belongs to the HSP33 family. Under oxidizing conditions two disulfide bonds are formed involving the reactive cysteines. Under reducing conditions zinc is bound to the reactive cysteines and the protein is inactive.

It localises to the cytoplasm. Redox regulated molecular chaperone. Protects both thermally unfolding and oxidatively damaged proteins from irreversible aggregation. Plays an important role in the bacterial defense system toward oxidative stress. The sequence is that of 33 kDa chaperonin from Mannheimia succiniciproducens (strain KCTC 0769BP / MBEL55E).